The chain runs to 237 residues: Large ribosomal subunit protein uL1 (237 aa).

The protein belongs to the universal ribosomal protein uL1 family. Part of the 50S ribosomal subunit.

In terms of biological role, binds directly to 23S rRNA. The L1 stalk is quite mobile in the ribosome, and is involved in E site tRNA release. Its function is as follows. Protein L1 is also a translational repressor protein, it controls the translation of the L11 operon by binding to its mRNA. This chain is Large ribosomal subunit protein uL1, found in Dehalococcoides mccartyi (strain CBDB1).